The sequence spans 302 residues: Ribose-5-phosphate isomerase (302 aa).

It belongs to the ribose 5-phosphate isomerase family.

It is found in the cytoplasm. The enzyme catalyses aldehydo-D-ribose 5-phosphate = D-ribulose 5-phosphate. It participates in carbohydrate degradation; pentose phosphate pathway; D-ribose 5-phosphate from D-ribulose 5-phosphate (non-oxidative stage): step 1/1. The sequence is that of Ribose-5-phosphate isomerase (RKI1) from Cryptococcus neoformans var. neoformans serotype D (strain B-3501A) (Filobasidiella neoformans).